A 395-amino-acid chain; its full sequence is Subtilisin-like protease 5 (395 aa).

Positions 1–19 are cleaved as a signal peptide; that stretch reads MGFLTVLYLSLAALSVTNA. Residues 20–115 constitute a propeptide that is removed on maturation; that stretch reads AQIMSAPNGA…VEPDAIISQH (96 aa). The Inhibitor I9 domain occupies 36 to 112; the sequence is YIVVMKDDTS…VAFVEPDAII (77 aa). A Peptidase S8 domain is found at 124 to 395; sequence PWGLSRLSNR…RRLLYNGSGR (272 aa). Residues aspartate 155 and histidine 186 each act as charge relay system in the active site. Residues asparagine 229 and asparagine 247 are each glycosylated (N-linked (GlcNAc...) asparagine). Residue serine 341 is the Charge relay system of the active site. The disordered stretch occupies residues 374–395; it reads QPTIHNPGPDTTRRLLYNGSGR. N-linked (GlcNAc...) asparagine glycosylation is present at asparagine 391.

Belongs to the peptidase S8 family.

Its subcellular location is the secreted. Its function is as follows. Secreted subtilisin-like serine protease with keratinolytic activity that contributes to pathogenicity. The protein is Subtilisin-like protease 5 (SUB5) of Arthroderma otae (strain ATCC MYA-4605 / CBS 113480) (Microsporum canis).